The chain runs to 334 residues: Sensor protein BceS (334 aa).

Residues 1–12 (MIKAFLIERRSW) are Cytoplasmic-facing. The helical transmembrane segment at 13 to 33 (IAAFLFQQALMLFIAFVDPSI) threads the bilayer. A topological domain (extracellular) is located at residue serine 34. The helical transmembrane segment at 35–55 (FGNVLYMVYLCILFFIIFLWF) threads the bilayer. The Cytoplasmic segment spans residues 56 to 334 (RYRKETAFYK…RNQFEHVISV (279 aa)). The 206-residue stretch at 121 to 326 (AWIHEVKTPL…VFTLTFPIRN (206 aa)) folds into the Histidine kinase domain. Histidine 124 bears the Phosphohistidine; by autocatalysis mark.

The protein localises to the cell membrane. The catalysed reaction is ATP + protein L-histidine = ADP + protein N-phospho-L-histidine.. In terms of biological role, member of the two-component regulatory system BceS/BceR involved in the regulation of bacitracin resistance. Activates BceR in response to extracellular bacitracin. In Bacillus subtilis (strain 168), this protein is Sensor protein BceS (bceS).